A 285-amino-acid chain; its full sequence is Pantothenate synthetase (285 aa).

30–37 (MGNLHAGH) contributes to the ATP binding site. Residue histidine 37 is the Proton donor of the active site. Glutamine 61 is a binding site for (R)-pantoate. Glutamine 61 is a binding site for beta-alanine. 149–152 (GEKD) lines the ATP pocket. (R)-pantoate is bound at residue glutamine 155. 186–189 (LSSR) is an ATP binding site.

It belongs to the pantothenate synthetase family. In terms of assembly, homodimer.

The protein resides in the cytoplasm. The catalysed reaction is (R)-pantoate + beta-alanine + ATP = (R)-pantothenate + AMP + diphosphate + H(+). The protein operates within cofactor biosynthesis; (R)-pantothenate biosynthesis; (R)-pantothenate from (R)-pantoate and beta-alanine: step 1/1. Functionally, catalyzes the condensation of pantoate with beta-alanine in an ATP-dependent reaction via a pantoyl-adenylate intermediate. The protein is Pantothenate synthetase of Ectopseudomonas mendocina (strain ymp) (Pseudomonas mendocina).